Reading from the N-terminus, the 878-residue chain is Leucine--tRNA ligase (878 aa).

Low complexity predominate over residues 1-14; sequence MTASKSSSATASAS. The tract at residues 1-23 is disordered; sequence MTASKSSSATASASDRPDRYDPI. Positions 58–68 match the 'HIGH' region motif; sequence PYPSGSLHMGH. The short motif at 632-636 is the 'KMSKS' region element; the sequence is KMSKS. K635 lines the ATP pocket.

This sequence belongs to the class-I aminoacyl-tRNA synthetase family.

The protein localises to the cytoplasm. The enzyme catalyses tRNA(Leu) + L-leucine + ATP = L-leucyl-tRNA(Leu) + AMP + diphosphate. The sequence is that of Leucine--tRNA ligase from Synechococcus sp. (strain WH7803).